We begin with the raw amino-acid sequence, 639 residues long: tRNA uridine 5-carboxymethylaminomethyl modification enzyme MnmG (639 aa).

FAD contacts are provided by residues 13–18 (GGGHAG), Val125, and Ser180. NAD(+) is bound at residue 273 to 287 (GPRYCPSIEDKVVRF). Residue Gln370 coordinates FAD. Residues 620-639 (KRQGGNGPQSPRPDDGRARA) are disordered.

The protein belongs to the MnmG family. In terms of assembly, homodimer. Heterotetramer of two MnmE and two MnmG subunits. FAD serves as cofactor.

Its subcellular location is the cytoplasm. Functionally, NAD-binding protein involved in the addition of a carboxymethylaminomethyl (cmnm) group at the wobble position (U34) of certain tRNAs, forming tRNA-cmnm(5)s(2)U34. In Thioalkalivibrio sulfidiphilus (strain HL-EbGR7), this protein is tRNA uridine 5-carboxymethylaminomethyl modification enzyme MnmG.